Here is a 180-residue protein sequence, read N- to C-terminus: MASVVASAAVVTPFAASAASTTKSSQIVSVQAGLKAGVFGGKSEWQTKTQTNGSRVSCMQVWEPYNNLKFETLSYLPPLSQDALAKQIDYVIKSGWAPCIEFDVQGTVTREGSTMPGYYDGRYWTMWKLPMFGCTDSASVLREIEECKKLYGKKCYIRCLGFDNTRQVQCASFIVHQPTL.

The N-terminal 57 residues, 1–57 (MASVVASAAVVTPFAASAASTTKSSQIVSVQAGLKAGVFGGKSEWQTKTQTNGSRVS), are a transit peptide targeting the chloroplast.

Belongs to the RuBisCO small chain family. As to quaternary structure, heterohexadecamer of 8 large and 8 small subunits.

It is found in the plastid. It localises to the chloroplast. Functionally, ruBisCO catalyzes two reactions: the carboxylation of D-ribulose 1,5-bisphosphate, the primary event in carbon dioxide fixation, as well as the oxidative fragmentation of the pentose substrate. Both reactions occur simultaneously and in competition at the same active site. Although the small subunit is not catalytic it is essential for maximal activity. The polypeptide is Ribulose bisphosphate carboxylase small subunit, chloroplastic (Marchantia paleacea (Liverwort)).